Here is a 277-residue protein sequence, read N- to C-terminus: S-formylglutathione hydrolase FrmB (277 aa).

Catalysis depends on charge relay system residues Ser145, Asp221, and His254.

This sequence belongs to the esterase D family.

The enzyme catalyses S-formylglutathione + H2O = formate + glutathione + H(+). In terms of biological role, serine hydrolase involved in the detoxification of formaldehyde. Hydrolyzes S-formylglutathione to glutathione and formate. The polypeptide is S-formylglutathione hydrolase FrmB (frmB) (Escherichia coli (strain SMS-3-5 / SECEC)).